A 200-amino-acid polypeptide reads, in one-letter code: Pyrrolidone-carboxylate peptidase (200 aa).

Active-site residues include E78, C141, and H165.

The protein belongs to the peptidase C15 family. As to quaternary structure, homotetramer.

Its subcellular location is the cytoplasm. The enzyme catalyses Release of an N-terminal pyroglutamyl group from a polypeptide, the second amino acid generally not being Pro.. Removes 5-oxoproline from various penultimate amino acid residues except L-proline. The polypeptide is Pyrrolidone-carboxylate peptidase (Lactobacillus acidophilus (strain ATCC 700396 / NCK56 / N2 / NCFM)).